The following is a 268-amino-acid chain: Activator of basal transcription 1 (268 aa).

The stretch at 6–38 (KLVEEQKAAMEEEKEVNAEAAEELEEAEEASCN) forms a coiled coil. The RRM domain maps to 47-144 (GIVYLGHVPP…RKRSPFRYDL (98 aa)). A coiled-coil region spans residues 163–193 (AFERQVRRQRLRAEVAQAKRETDFYLRNVEQ). Residues 200–242 (ADGDATRPNSSWTFTQRPTEQELRAQKGARPGGRERARLATVQ) form a disordered region. Residues 206-217 (RPNSSWTFTQRP) are compositionally biased toward polar residues.

The protein belongs to the ESF2/ABP1 family. In terms of assembly, interacts with IGHMBP2. Interacts with ESF1/ABTAP.

The protein localises to the nucleus. It localises to the nucleolus. In terms of biological role, may be a novel TATA-binding protein (TBP) which can function as a basal transcription activator. Can act as a regulator of basal transcription for class II genes. This is Activator of basal transcription 1 (Abt1) from Rattus norvegicus (Rat).